Consider the following 1153-residue polypeptide: MFYSCCVSIEPRDPASEPTPTPRRPLRKSQPRSFSQAQPLSWAQLESVLSGRGAGLRNLRAVGVGEGQRRTTSLDPAEAEGTGAEGASQKGITTPFAELHASSAYNFLRGASQPEQMVEAARELGLSALACVDRDGFYGAARFATAVAESGADLATVFGAELSLDVPLTVLCKGREGYTRLSRVIADARMADPDKDSVRYPSLPQLAEAAGGHWLVLLDWRRTDAQLVDFFGADNVVVELQHTMNPADADRNERLHALAVRHGLREIVSSAPTCATPKHSRLAGAKAALRERKDMAAAEPTTHPVGGSWLRSGEEMLQLAGDCEWLARAVETSVQVAEECAFTLDLVAPNLPHFPVPEGYTEMTWLRAITERGGAQRYGPRGSSAAANQAWATIDRELETIEQLGFPGYFLIVHDIVSFCHENNIFCQGRGSAANSAVCFALGITTVDAVASGLLFERFLSPERDGPPDIDLDIESGRREEAIQYVYSRYGRENAAQVANVITYRRRGATRDAGRALGYAPGQIDAWTRHPEQTPDVVQNLAEQMLDHPRHLGIHSGGMVICDRPIAQVVPTEWARMEGRSVVQWDKDDCAAVGLVKFDLLGLGMLEALHHAVDQVRAHRGREVELWRLDPTESEVYAMLSRADAVGVFQVESRAQMSTLPRLKPRTFYDLVVEVALIRPGPIQGGSVHPYIRRRNGLEPVTFDHPCLEPALTKTLGIPLFQEQLMQMAVDAAGFSGAEADTLRRAMGSKRSPQKMERLKKRFYQGLEAKNGIRGVVADRLWDKIVAFASYGFPESHSQSFASLVYYSAWFKYHYPAEFCVALLRAQPMGFYSPQSLLADARRHGVEVLPVDVNDSDVQVDAVASLATPPRTNRPTGVHGLGRGTGEPVGQIRLGLSGAGGVKGISAEVAERIVEARERIGRFTSVEDLSREAGLTVAHVEKLARAGALGSLGLTRRQAVWAAGVAATERPGMLPGTSGVHAPALPGMSAFEMVASELATTGVTTAEHPVQLLREYLDEWHLRPAPRGVHPGDAAPRGGAAVVTADSLLRVPDGTRVRVAGVVTHRQRPATAGGVVFFGLEDETGLANIVVSQGLWARQRAVALNAKILVVRGIVHNAEGAATVTADLLEQVETQLRPAGEIAGAHAGSRDFR.

Disordered stretches follow at residues 1-39 (MFYS…QAQP) and 64-89 (VGEG…GASQ).

This sequence belongs to the DNA polymerase type-C family. DnaE2 subfamily.

Its subcellular location is the cytoplasm. It catalyses the reaction DNA(n) + a 2'-deoxyribonucleoside 5'-triphosphate = DNA(n+1) + diphosphate. Its function is as follows. DNA polymerase involved in damage-induced mutagenesis and translesion synthesis (TLS). It is not the major replicative DNA polymerase. This Corynebacterium jeikeium (strain K411) protein is Error-prone DNA polymerase.